A 2173-amino-acid polypeptide reads, in one-letter code: Mediator of DNA damage checkpoint protein 1 (2173 aa).

Positions methionine 1–glutamine 19 are enriched in acidic residues. Positions methionine 1–glutamate 22 are disordered. The tract at residues methionine 1 to threonine 150 is interaction with CHEK2. Residues glutamate 2–threonine 222 form an interaction with the MRN complex region. Threonine 4 is modified (phosphothreonine). The 52-residue stretch at asparagine 54–lysine 105 folds into the FHA domain. Serine 108 carries the post-translational modification Phosphoserine. The interval leucine 145–glutamate 570 is required for nuclear localization (NLS1). Position 146 is a phosphothreonine (threonine 146). A phosphoserine mark is found at serine 168, serine 176, serine 198, and serine 220. The tract at residues serine 198 to leucine 320 is disordered. Threonine 222 carries the post-translational modification Phosphothreonine. Residues glycine 227–threonine 244 show a composition bias toward low complexity. A compositionally biased stretch (basic and acidic residues) spans glutamine 259 to valine 276. A Phosphoserine modification is found at serine 301. A Phosphothreonine modification is found at threonine 303. The segment covering aspartate 308–leucine 320 has biased composition (basic and acidic residues). A Phosphoserine modification is found at serine 331. The residue at position 333 (threonine 333) is a Phosphothreonine. Residues glycine 359–glutamate 383 form a disordered region. Phosphoserine is present on residues serine 374 and serine 378. Threonine 380 carries the phosphothreonine modification. Serine 396, serine 399, and serine 404 each carry phosphoserine. Threonine 406 carries the phosphothreonine modification. Serine 413 carries the phosphoserine modification. Residues leucine 444 to serine 515 are disordered. Threonine 451 is subject to Phosphothreonine. Serine 455 is modified (phosphoserine). Threonine 457 bears the Phosphothreonine mark. 6 positions are modified to phosphoserine: serine 487, serine 497, serine 500, serine 506, serine 507, and serine 515. Position 525 is a phosphothreonine (threonine 525). Serine 592 bears the Phosphoserine mark. Lysine 618 participates in a covalent cross-link: Glycyl lysine isopeptide (Lys-Gly) (interchain with G-Cter in SUMO1); alternate. A Glycyl lysine isopeptide (Lys-Gly) (interchain with G-Cter in SUMO2); alternate cross-link involves residue lysine 618. Serine 631 is subject to Phosphoserine. Disordered stretches follow at residues valine 652–aspartate 697 and histidine 773–serine 1770. Positions glycine 673–glutamate 687 are enriched in basic and acidic residues. Acidic residues predominate over residues aspartate 688–aspartate 697. Phosphoserine is present on residues serine 782 and serine 795. Lysine 814 is subject to N6-acetyllysine. Basic and acidic residues-rich tracts occupy residues glutamate 821–threonine 846, glutamate 853–lysine 864, aspartate 870–glutamine 903, and alanine 916–proline 953. A phosphoserine mark is found at serine 957, serine 1000, serine 1035, serine 1070, and serine 1088. Residues serine 957–serine 969 show a composition bias toward polar residues. Residues threonine 1079–glutamate 1090 are compositionally biased toward basic and acidic residues. Residues proline 1105 to serine 1115 are compositionally biased toward basic residues. The segment covering proline 1131–serine 1156 has biased composition (polar residues). Positions serine 1150 to glutamate 1694 are interaction with the PRKDC complex. The span at valine 1157–glutamate 1169 shows a compositional bias: low complexity. At threonine 1159 the chain carries Phosphothreonine. The span at glutamine 1171 to threonine 1189 shows a compositional bias: polar residues. At threonine 1200 the chain carries Phosphothreonine. Phosphoserine is present on serine 1237. Phosphothreonine is present on residues threonine 1241, threonine 1282, and threonine 1304. A compositionally biased stretch (low complexity) spans valine 1280–glutamate 1292. The segment covering glutamine 1294 to serine 1320 has biased composition (polar residues). Residues valine 1321–glutamate 1333 show a composition bias toward low complexity. The segment covering glutamine 1335–threonine 1353 has biased composition (polar residues). The segment covering threonine 1390 to serine 1402 has biased composition (low complexity). Composition is skewed to polar residues over residues proline 1418 to proline 1434, lysine 1456 to serine 1487, glutamine 1499 to lysine 1527, and glutamine 1540 to arginine 1559. Residues serine 1483 and serine 1484 each carry the phosphoserine modification. N6-acetyllysine is present on lysine 1486. Threonine 1509 and threonine 1550 each carry phosphothreonine. Over residues valine 1567–proline 1578 the composition is skewed to low complexity. Polar residues predominate over residues glutamine 1581–threonine 1598. 2 positions are modified to phosphothreonine: threonine 1617 and threonine 1632. The span at serine 1626 to alanine 1639 shows a compositional bias: polar residues. The residue at position 1648 (serine 1648) is a Phosphoserine. Residues threonine 1651 and threonine 1673 each carry the phosphothreonine modification. Polar residues predominate over residues proline 1664–alanine 1680. The residue at position 1688 (serine 1688) is a Phosphoserine. Residues threonine 1692, threonine 1714, threonine 1748, and threonine 1755 each carry the phosphothreonine modification. A compositionally biased stretch (polar residues) spans proline 1705 to alanine 1721. Polar residues predominate over residues glutamine 1761–serine 1770. At serine 1765 the chain carries Phosphoserine. Threonine 1781 is subject to Phosphothreonine. Residues proline 1782–threonine 2173 form a required for nuclear localization (NLS2) region. Phosphoserine occurs at positions 1786 and 1795. A disordered region spans residues arginine 1809–asparagine 1971. A Glycyl lysine isopeptide (Lys-Gly) (interchain with G-Cter in SUMO2) cross-link involves residue lysine 1824. Serine 1859 is modified (phosphoserine). A Glycyl lysine isopeptide (Lys-Gly) (interchain with G-Cter in SUMO2) cross-link involves residue lysine 1874. A Phosphothreonine modification is found at threonine 1884. Residue serine 1904 is modified to Phosphoserine. Polar residues predominate over residues histidine 1907 to threonine 1920. Lysine 1924 participates in a covalent cross-link: Glycyl lysine isopeptide (Lys-Gly) (interchain with G-Cter in SUMO1); alternate. Lysine 1924 is covalently cross-linked (Glycyl lysine isopeptide (Lys-Gly) (interchain with G-Cter in SUMO2); alternate). The span at alanine 1931–methionine 1941 shows a compositional bias: basic and acidic residues. A Phosphothreonine modification is found at threonine 1942. 2 BRCT domains span residues alanine 1976–valine 2054 and arginine 2075–serine 2166. An Omega-N-methylarginine modification is found at arginine 2027.

Homodimer. Interacts with H2AX, which requires phosphorylation of H2AX on 'Ser-139'. Interacts with the MRN complex, composed of MRE11, RAD50, and NBN. Interacts with CHEK2, which requires ATM-mediated phosphorylation of 'Thr-68' within the FHA domain of CHEK2. Interacts constitutively with the BRCA1-BARD1 complex, SMC1A and TP53BP1. Interacts with ATM and FANCD2, and these interactions are reduced upon DNA damage. Also interacts with the PRKDC complex, composed of XRCC6/KU70, XRCC5/KU80 and PRKDC/XRCC7. This interaction may be required for PRKDC autophosphorylation, which is essential for DNA double strand break (DSB) repair. When phosphorylated by ATM, interacts with RNF8 (via FHA domain). Interacts with CEP164. When phosphorylated, interacts with APTX (via FHA-like domain). Interacts (when phosphorylated) with TOPBP1; promoting TOPBP1 localization to DNA damage sites during mitosis. Interacts (when phosphorylated) with NBN; promoting NBN and MRN complex localization to DNA damage sites. Post-translationally, phosphorylated upon exposure to ionizing radiation (IR), ultraviolet radiation (UV), and hydroxyurea (HU). Phosphorylation in response to IR requires ATM, NBN, and possibly CHEK2. Also phosphorylated during the G2/M phase of the cell cycle and during activation of the mitotic spindle checkpoint. Phosphorylation at Thr-4 by ATM stabilizes and enhances homodimerization via the FHA domain. Phosphorylated at Ser-168 and Ser-198 by CK2 in response to DNA damage during mitosis, promoting interaction with TOPBP1. Phosphorylated by CK2 in response to DNA damage, promoting interaction with NBN and recruitment of the MRN complex to DNA damage sites. In terms of processing, sumoylation at Lys-1924 by PIAS4 following DNA damage promotes ubiquitin-mediated degradation. Ubiquitinated by RNF4, leading to proteasomal degradation; undergoes 'Lys-48'-linked polyubiquitination.

It is found in the nucleus. The protein resides in the chromosome. Functionally, histone reader protein required for checkpoint-mediated cell cycle arrest in response to DNA damage within both the S phase and G2/M phases of the cell cycle. Specifically recognizes and binds histone H2AX phosphorylated at 'Ser-139', a marker of DNA damage, serving as a scaffold for the recruitment of DNA repair and signal transduction proteins to discrete foci of DNA damage sites. Also required for downstream events subsequent to the recruitment of these proteins. These include phosphorylation and activation of the ATM, CHEK1 and CHEK2 kinases, and stabilization of TP53/p53 and apoptosis. ATM and CHEK2 may also be activated independently by a parallel pathway mediated by TP53BP1. Required for chromosomal stability during mitosis by promoting recruitment of TOPBP1 to DNA double strand breaks (DSBs): TOPBP1 forms filamentous assemblies that bridge MDC1 and tether broken chromosomes during mitosis. Required for the repair of DSBs via homologous recombination by promoting recruitment of NBN component of the MRN complex to DSBs. The protein is Mediator of DNA damage checkpoint protein 1 (MDC1) of Macaca mulatta (Rhesus macaque).